Here is a 266-residue protein sequence, read N- to C-terminus: Enterotoxin type C-2 (266 aa).

The first 27 residues, methionine 1–alanine 27, serve as a signal peptide directing secretion. The Zn(2+) site is built by aspartate 36, histidine 74, glutamate 98, glutamate 107, and aspartate 110. Residues cysteine 120 and cysteine 137 are joined by a disulfide bond. Zn(2+) contacts are provided by histidine 145, glutamate 146, and histidine 149.

This sequence belongs to the staphylococcal/streptococcal toxin family. Interacts with host MHC class II molecules composed of alpha/HLA-DRA and beta/HLA-DRB1 chains. Zn(2+) serves as cofactor.

The protein localises to the secreted. Staphylococcal enterotoxin that activates the host immune system by binding as unprocessed molecules to major histocompatibility (MHC) complex class II and T-cell receptor (TCR) molecules. In turn, this ternary complex activates a large number of T-lymphocytes initiating a systemic release of pro-inflammatory cytokines. Also causes the intoxication staphylococcal food poisoning syndrome. This chain is Enterotoxin type C-2 (entC2), found in Staphylococcus aureus.